The sequence spans 259 residues: MATIKEIKELLVTVKELESPIFLELEKDNRSGVQKEISKRKRVIQAELDENLRLESMLSYEKELYKQGLTLIAGIDEVGRGPLAGPVVAAAVILPKNCKIKGLNDSKKIPKKKHLEIFQAVQDQALSIGIGIIDNQVIDQVNIYEATKLAMQEAISQLSPQPEHLLIDAMKLDLPISQTSIIKGDANSLSIAAASIVAKVTRDELMKEYDQQFSGYDFATNAGYGTAKHLEGLTKLGVTPIHRTSFEPVKSLVLGKKES.

The region spanning 70-258 (TLIAGIDEVG…VKSLVLGKKE (189 aa)) is the RNase H type-2 domain. Positions 76, 77, and 168 each coordinate a divalent metal cation.

Belongs to the RNase HII family. It depends on Mn(2+) as a cofactor. Mg(2+) serves as cofactor.

It is found in the cytoplasm. It carries out the reaction Endonucleolytic cleavage to 5'-phosphomonoester.. Endonuclease that specifically degrades the RNA of RNA-DNA hybrids. This is Ribonuclease HII from Streptococcus pneumoniae (strain 70585).